The primary structure comprises 290 residues: Fructose-1,6-bisphosphatase class 1 (290 aa).

E78, D96, L98, and D99 together coordinate Mg(2+). Residues 99–102 (DGSS), Y201, and K226 contribute to the substrate site. E232 is a Mg(2+) binding site.

It belongs to the FBPase class 1 family. Homotetramer. The cofactor is Mg(2+).

It is found in the cytoplasm. The catalysed reaction is beta-D-fructose 1,6-bisphosphate + H2O = beta-D-fructose 6-phosphate + phosphate. The protein operates within carbohydrate biosynthesis; gluconeogenesis. The chain is Fructose-1,6-bisphosphatase class 1 from Helicobacter pylori (strain G27).